A 436-amino-acid chain; its full sequence is GTPase Der (436 aa).

2 consecutive EngA-type G domains span residues 3–167 (NIVA…PIKP) and 177–352 (PRFA…ENRQ). GTP is bound by residues 9 to 16 (GRPNVGKS), 56 to 60 (DTGGY), 119 to 122 (NKVD), 183 to 190 (GRPNAGKS), 230 to 234 (DTAGI), and 295 to 298 (NKWD). Residues 353–436 (QRISTSKFNE…VPIDIYIREK (84 aa)) form the KH-like domain.

This sequence belongs to the TRAFAC class TrmE-Era-EngA-EngB-Septin-like GTPase superfamily. EngA (Der) GTPase family. As to quaternary structure, associates with the 50S ribosomal subunit.

Its function is as follows. GTPase that plays an essential role in the late steps of ribosome biogenesis. The protein is GTPase Der of Flavobacterium psychrophilum (strain ATCC 49511 / DSM 21280 / CIP 103535 / JIP02/86).